Consider the following 1030-residue polypeptide: MMS19 nucleotide excision repair protein homolog (1030 aa).

The residue at position 2 (A2) is an N-acetylalanine. At K496 the chain carries N6-acetyllysine. HEAT repeat units follow at residues Q866–K904, L908–Q946, S949–P987, and L990–P1028. Phosphoserine is present on S1027.

Belongs to the MET18/MMS19 family. In terms of assembly, component of the CIA complex. In the CIA complex, interacts directly with CIAO2B and CIAO3. Component of the MMXD complex, composed of CIAO1, ERCC2, CIAO2B, MMS19 and SLC25A5. Interacts with CIAO2B; the interaction is direct. Interacts with ERCC2/XPD; the interaction is direct. Interacts with ERCC3/XPB and NCOA3/RAC3. Interacts with RTEL1; the interaction mediates the association of RTEL1 with the CIA complex. Interacts with BRIP1. Interacts with KIF4A; the interaction facilitates the transfer of Fe-S clusters to KIF4A to ensure proper localization of KIF4A to the mitotic machinery components. Interacts with CCDC117; the interaction is indirect. Ubiquitinated; undergoes 'Lys-48'-linked polyubiquitination by MAGEF1-NSMCE1 ubiquitin ligase complex leading to proteasomal degradation. In terms of tissue distribution, ubiquitously expressed with higher expression in testis.

The protein resides in the nucleus. The protein localises to the cytoplasm. Its subcellular location is the cytoskeleton. It localises to the spindle. It is found in the microtubule organizing center. The protein resides in the centrosome. In terms of biological role, key component of the cytosolic iron-sulfur protein assembly (CIA) complex, a multiprotein complex that mediates the incorporation of iron-sulfur cluster into apoproteins specifically involved in DNA metabolism and genomic integrity. In the CIA complex, MMS19 acts as an adapter between early-acting CIA components and a subset of cellular target iron-sulfur proteins such as ERCC2/XPD, FANCJ and RTEL1, thereby playing a key role in nucleotide excision repair (NER), homologous recombination-mediated double-strand break DNA repair, DNA replication and RNA polymerase II (POL II) transcription. As part of the mitotic spindle-associated MMXD complex, plays a role in chromosome segregation, probably by facilitating iron-sulfur (Fe-S) cluster assembly into ERCC2/XPD. Together with CIAO2, facilitates the transfer of Fe-S clusters to the motor protein KIF4A, which ensures proper localization of KIF4A to mitotic machinery components to promote the progression of mitosis. Indirectly acts as a transcriptional coactivator of estrogen receptor (ER), via its role in iron-sulfur insertion into some component of the TFIIH-machinery. The polypeptide is MMS19 nucleotide excision repair protein homolog (Homo sapiens (Human)).